A 365-amino-acid chain; its full sequence is Alanine racemase (365 aa).

Catalysis depends on Lys-35, which acts as the Proton acceptor; specific for D-alanine. An N6-(pyridoxal phosphate)lysine modification is found at Lys-35. Residue Arg-130 coordinates substrate. Tyr-256 (proton acceptor; specific for L-alanine) is an active-site residue. Position 304 (Met-304) interacts with substrate.

The protein belongs to the alanine racemase family. Requires pyridoxal 5'-phosphate as cofactor.

It catalyses the reaction L-alanine = D-alanine. It functions in the pathway amino-acid biosynthesis; D-alanine biosynthesis; D-alanine from L-alanine: step 1/1. Functionally, catalyzes the interconversion of L-alanine and D-alanine. May also act on other amino acids. The sequence is that of Alanine racemase (alr) from Polaromonas naphthalenivorans (strain CJ2).